A 261-amino-acid chain; its full sequence is Zinc finger protein 664 (261 aa).

9 consecutive C2H2-type zinc fingers follow at residues 3–25 (YKCP…QKIH), 31–53 (HKCD…WRDH), 59–81 (YKCD…KKIH), 87–109 (YKCY…MRVH), 115–137 (YVCS…QRVH), 143–165 (FKCE…QRVH), 171–193 (YKCY…QRVH), 199–221 (YRCC…QRVH), and 227–249 (FKCD…QRVH). Lys257 is covalently cross-linked (Glycyl lysine isopeptide (Lys-Gly) (interchain with G-Cter in SUMO2)).

It belongs to the krueppel C2H2-type zinc-finger protein family.

The protein resides in the nucleus. Its function is as follows. May be involved in transcriptional regulation. In Mus musculus (Mouse), this protein is Zinc finger protein 664 (Znf664).